We begin with the raw amino-acid sequence, 289 residues long: Formamidopyrimidine-DNA glycosylase (289 aa).

Pro-2 (schiff-base intermediate with DNA) is an active-site residue. Residue Glu-3 is the Proton donor of the active site. Lys-61 functions as the Proton donor; for beta-elimination activity in the catalytic mechanism. Positions 96, 115, and 161 each coordinate DNA. The FPG-type zinc-finger motif lies at 247–281 (SAYGQEDRPCPRCGTAIRREKFMNRSSFSCPKCQR). Residue Arg-271 is the Proton donor; for delta-elimination activity of the active site.

Belongs to the FPG family. As to quaternary structure, monomer. Zn(2+) serves as cofactor.

It catalyses the reaction Hydrolysis of DNA containing ring-opened 7-methylguanine residues, releasing 2,6-diamino-4-hydroxy-5-(N-methyl)formamidopyrimidine.. The enzyme catalyses 2'-deoxyribonucleotide-(2'-deoxyribose 5'-phosphate)-2'-deoxyribonucleotide-DNA = a 3'-end 2'-deoxyribonucleotide-(2,3-dehydro-2,3-deoxyribose 5'-phosphate)-DNA + a 5'-end 5'-phospho-2'-deoxyribonucleoside-DNA + H(+). Functionally, involved in base excision repair of DNA damaged by oxidation or by mutagenic agents. Acts as a DNA glycosylase that recognizes and removes damaged bases. Has a preference for oxidized purines, such as 7,8-dihydro-8-oxoguanine (8-oxoG). Has AP (apurinic/apyrimidinic) lyase activity and introduces nicks in the DNA strand. Cleaves the DNA backbone by beta-delta elimination to generate a single-strand break at the site of the removed base with both 3'- and 5'-phosphates. The chain is Formamidopyrimidine-DNA glycosylase from Rhodococcus opacus (strain B4).